Reading from the N-terminus, the 884-residue chain is Telomerase reverse transcriptase (884 aa).

Positions 422-725 (CRNHNSYTLS…TVIQFCAMHI (304 aa)) constitute a Reverse transcriptase domain. Mg(2+) is bound by residues Asp530, Asp670, and Asp671.

This sequence belongs to the reverse transcriptase family. Telomerase subfamily. Catalytic subunit of the telomerase holoenzyme complex composed minimally of EST2 and the telomerase RNA template component.

It is found in the nucleus. The protein localises to the chromosome. It localises to the telomere. The catalysed reaction is DNA(n) + a 2'-deoxyribonucleoside 5'-triphosphate = DNA(n+1) + diphosphate. In terms of biological role, telomerase is a ribonucleoprotein enzyme essential for the replication of chromosome termini in most eukaryotes. It elongates telomeres. It is a reverse transcriptase that adds simple sequence repeats to chromosome ends by copying a template sequence within the RNA component of the enzyme. The polypeptide is Telomerase reverse transcriptase (EST2) (Saccharomyces cerevisiae (strain ATCC 204508 / S288c) (Baker's yeast)).